The following is a 687-amino-acid chain: Putative secreted metallopeptidase (687 aa).

The first 22 residues, 1–22 (MLFTSTAVAALSGALLIQPALA), serve as a signal peptide directing secretion. 5 N-linked (GlcNAc...) asparagine glycosylation sites follow: Asn-54, Asn-114, Asn-252, Asn-256, and Asn-379.

It belongs to the peptidase M10B family.

The protein localises to the secreted. The sequence is that of Putative secreted metallopeptidase from Arthroderma benhamiae (strain ATCC MYA-4681 / CBS 112371) (Trichophyton mentagrophytes).